Reading from the N-terminus, the 741-residue chain is Copper-transporting ATPase (741 aa).

The HMA domain occupies 1 to 67 (MKESFYIEGM…LIEKLGYSPK (67 aa)). Over 1-83 (MKESFYIEGM…KKEFFSPNVK (83 aa)) the chain is Cytoplasmic. The Cu cation site is built by Cys-12 and Cys-15. The chain crosses the membrane as a helical span at residues 84–104 (LALAVIFTLFVVYLSMGAMLS). Residues 105–124 (PSLLPESLLTINNHSNFLNA) are Extracellular-facing. Residues 125–144 (CLQLIGTLIVMHLGRDFYIQ) traverse the membrane as a helical segment. Over 145 to 151 (GFKALWH) the chain is Cytoplasmic. A helical membrane pass occupies residues 152–172 (RQPNMSSLIAIGTSAALISSL). Topologically, residues 173-190 (WQLYFVYTSQWSYGHYYF) are extracellular. A helical membrane pass occupies residues 191–211 (ESVCVILMFVMVGKRIENVSK). Over 212–339 (DKALDAMQAL…KAEISRLADK (128 aa)) the chain is Cytoplasmic. A helical membrane pass occupies residues 340 to 362 (VSSVFVPSVIAIAILAFVVWLII). Residues 363 to 375 (APKPDFWWNFGIA) lie on the Extracellular side of the membrane. A helical membrane pass occupies residues 376–393 (LEVFVSVLVISCPCALGL). Topologically, residues 394–681 (ATPMSILVAN…KLSQATIKNI (288 aa)) are cytoplasmic. The active-site 4-aspartylphosphate intermediate is the Asp-431. Mg(2+) is bound by residues Asp-627 and Asp-631. Residues 682-701 (KENLFWAFCYNSVFIPLACG) form a helical membrane-spanning segment. Residues 702–712 (VLYKANIMLSP) lie on the Extracellular side of the membrane. The chain crosses the membrane as a helical span at residues 713-731 (AIAGLAMSLSSVSVVLNSQ). At 732–741 (RLRNFKIKDH) the chain is on the cytoplasmic side.

This sequence belongs to the cation transport ATPase (P-type) (TC 3.A.3) family. Type IB subfamily.

The protein localises to the cell membrane. It catalyses the reaction Cu(2+)(in) + ATP + H2O = Cu(2+)(out) + ADP + phosphate + H(+). Its function is as follows. Probably involved in copper export. This is Copper-transporting ATPase (copA) from Helicobacter pylori (Campylobacter pylori).